A 128-amino-acid polypeptide reads, in one-letter code: Phosphoribosyl-AMP cyclohydrolase (128 aa).

D79 is a Mg(2+) binding site. Zn(2+) is bound at residue C80. Residues D81 and D83 each contribute to the Mg(2+) site. Zn(2+)-binding residues include C97 and C104.

This sequence belongs to the PRA-CH family. Homodimer. The cofactor is Mg(2+). It depends on Zn(2+) as a cofactor.

Its subcellular location is the cytoplasm. It catalyses the reaction 1-(5-phospho-beta-D-ribosyl)-5'-AMP + H2O = 1-(5-phospho-beta-D-ribosyl)-5-[(5-phospho-beta-D-ribosylamino)methylideneamino]imidazole-4-carboxamide. It participates in amino-acid biosynthesis; L-histidine biosynthesis; L-histidine from 5-phospho-alpha-D-ribose 1-diphosphate: step 3/9. In terms of biological role, catalyzes the hydrolysis of the adenine ring of phosphoribosyl-AMP. The protein is Phosphoribosyl-AMP cyclohydrolase of Saccharophagus degradans (strain 2-40 / ATCC 43961 / DSM 17024).